Consider the following 319-residue polypeptide: Probable arabinan endo-1,5-alpha-L-arabinosidase A (319 aa).

The N-terminal stretch at 1–19 (MYLQSSLALVLLRAAVVHG) is a signal peptide. Residue Asp34 is the Proton acceptor of the active site. N-linked (GlcNAc...) asparagine glycosylation is present at Asn53. The Proton donor role is filled by Glu198.

It belongs to the glycosyl hydrolase 43 family.

The protein resides in the secreted. The enzyme catalyses Endohydrolysis of (1-&gt;5)-alpha-arabinofuranosidic linkages in (1-&gt;5)-arabinans.. It participates in glycan metabolism; L-arabinan degradation. In terms of biological role, endo-1,5-alpha-L-arabinanase involved in degradation of pectin. Its preferred substrate is linear 1,5-alpha-L-arabinan. The chain is Probable arabinan endo-1,5-alpha-L-arabinosidase A (abnA) from Aspergillus flavus (strain ATCC 200026 / FGSC A1120 / IAM 13836 / NRRL 3357 / JCM 12722 / SRRC 167).